The chain runs to 528 residues: Sodium-dependent lysophosphatidylcholine symporter 1 (528 aa).

Over 1–37 the chain is Cytoplasmic; the sequence is MAGGGGAERVRVGAAAAGLLPPSCRQPRRRESRERLS. A helical transmembrane segment spans residues 38 to 66; sequence VCSKLCYAVGGAPYQTTGCALGFFLQIYL. The Extracellular portion of the chain corresponds to 67–73; sequence LDVAQLD. The chain crosses the membrane as a helical span at residues 74–99; the sequence is PFYASIILFVGRAWDAITDPMVGFFI. Over 100 to 109 the chain is Cytoplasmic; it reads SKTPWTRFGR. Residues 110–129 traverse the membrane as a helical segment; that stretch reads LMPWIIFSTPFAVISYFLIW. At 130 to 138 the chain is on the extracellular side; sequence FVPDISTGQ. A helical membrane pass occupies residues 139-161; the sequence is VMWYLIFYCIFQTLVTCFHVPYS. Residues 162-176 lie on the Cytoplasmic side of the membrane; sequence ALTMFISREQSERDS. The chain crosses the membrane as a helical span at residues 177-199; the sequence is ATAYRMTVEVLGTVLGTAIQGQI. Over 200-241 the chain is Extracellular; it reads VGKAVTPCIENPPFLSETNFSVAIRNVNMTHYTGSLADTRNA. Residues Cys-207 and Cys-460 are joined by a disulfide bond. N-linked (GlcNAc...) asparagine glycosylation is found at Asn-218 and Asn-227. A helical membrane pass occupies residues 242–263; the sequence is YMVAAGVIGGLYILCAVILSVG. Topologically, residues 264 to 295 are cytoplasmic; the sequence is VREKRESSELQSDEPVSFFRGLKLVMNHGAYI. The helical transmembrane segment at 296–319 threads the bilayer; that stretch reads KLITGFLFTSLAFMLLEGNFALFC. The Extracellular portion of the chain corresponds to 320–328; the sequence is TYTLGFRNE. Residues 329–351 form a helical membrane-spanning segment; sequence FQNILLAIMLSATLTIPFWQWFL. Residues 352-355 lie on the Cytoplasmic side of the membrane; sequence TRFG. The chain crosses the membrane as a helical span at residues 356–376; sequence KKTAVYVGISSAVPFLITVVV. At 377 to 381 the chain is on the extracellular side; sequence LDSNL. Residues 382–404 form a helical membrane-spanning segment; it reads VVTYIVAVAAGISVAAAFLLPWS. Residues 405–427 are Cytoplasmic-facing; that stretch reads MLPDVIDDFKLQHPESRGHEAIF. Residues 428-450 form a helical membrane-spanning segment; that stretch reads FSFYVFFTKFTSGVSLGISTLSL. Residues 451-467 are Extracellular-facing; the sequence is DFAGYQTRGCSQPSEVN. The helical transmembrane segment at 468–490 threads the bilayer; sequence ITLKLLVSAVPVGLILLGLLLFK. The Cytoplasmic segment spans residues 491–528; sequence LYPIDEEKRRENKKALQDLREESNSSSESDSTELANIV. The segment covering 503 to 513 has biased composition (basic and acidic residues); it reads KKALQDLREES. Residues 503–528 are disordered; it reads KKALQDLREESNSSSESDSTELANIV. Low complexity predominate over residues 514–528; that stretch reads NSSSESDSTELANIV.

This sequence belongs to the major facilitator superfamily.

The protein localises to the cell membrane. It localises to the endoplasmic reticulum membrane. The enzyme catalyses a 1-acyl-sn-glycero-3-phosphocholine(in) + Na(+)(in) = a 1-acyl-sn-glycero-3-phosphocholine(out) + Na(+)(out). It carries out the reaction 1-(4Z,7Z,10Z,13Z,16Z,19Z-docosahexaenoyl)-sn-glycero-3-phosphocholine(in) + Na(+)(in) = 1-(4Z,7Z,10Z,13Z,16Z,19Z-docosahexaenoyl)-sn-glycero-3-phosphocholine(out) + Na(+)(out). It catalyses the reaction 1-(9Z-octadecenoyl)-sn-glycero-3-phosphocholine(in) + Na(+)(in) = 1-(9Z-octadecenoyl)-sn-glycero-3-phosphocholine(out) + Na(+)(out). The catalysed reaction is 1-hexadecanoyl-sn-glycero-3-phosphocholine(in) + Na(+)(in) = 1-hexadecanoyl-sn-glycero-3-phosphocholine(out) + Na(+)(out). The enzyme catalyses a 1-acyl-sn-glycero-3-phosphoethanolamine(in) + Na(+)(in) = a 1-acyl-sn-glycero-3-phosphoethanolamine(out) + Na(+)(out). Functionally, sodium-dependent lysophosphatidylcholine (LPC) symporter, which plays an essential role for blood-brain barrier formation and function. Specifically expressed in endothelium of the blood-brain barrier of micro-vessels and transports LPC into the brain. Transport of LPC is essential because it constitutes the major mechanism by which docosahexaenoic acid (DHA), an omega-3 fatty acid that is essential for normal brain growth and cognitive function, enters the brain. Transports LPC carrying long-chain fatty acids such LPC oleate and LPC palmitate with a minimum acyl chain length of 14 carbons. Does not transport docosahexaenoic acid in unesterified fatty acid. This chain is Sodium-dependent lysophosphatidylcholine symporter 1, found in Gallus gallus (Chicken).